A 2474-amino-acid chain; its full sequence is Highly reducing polyketide synthase 40 (2474 aa).

In terms of domain architecture, Ketosynthase family 3 (KS3) spans 1–294 (MFKETEIQQR…GSNAHIIIDD (294 aa)). Residues Cys42, His177, and His217 each act as for beta-ketoacyl synthase activity in the active site. The Malonyl-CoA:ACP transacylase (MAT) domain maps to 459-798 (FVFTGQGAQW…GYESVLRRGT (340 aa)). Residues 864-998 (HELLGAPVPD…GLVVTEYEQP (135 aa)) are N-terminal hotdog fold. Positions 864-1182 (HELLGAPVPD…ITTVARSEGA (319 aa)) constitute a PKS/mFAS DH domain. The active-site Proton acceptor; for dehydratase activity is the His896. A C-terminal hotdog fold region spans residues 1027–1182 (KVETSFRQLY…ITTVARSEGA (156 aa)). Asp1093 functions as the Proton donor; for dehydratase activity in the catalytic mechanism. The interval 1232–1535 (VEMMCFLYIK…DLHIYDFPDH (304 aa)) is methyltransferase (CMet) domain. Positions 1770-2063 (GLLDSLQFQD…SGSHMGKLVL (294 aa)) constitute an Enoyl reductase (ER) domain. Positions 2087-2263 (ASYLLSGGLG…PGVAVDLGMI (177 aa)) constitute a Ketoreductase (KR) domain. A Carrier domain is found at 2385–2462 (DAAKIVSAAI…ELAELAAKRS (78 aa)). Residue Ser2422 is modified to O-(pantetheine 4'-phosphoryl)serine.

It depends on pantetheine 4'-phosphate as a cofactor.

Its pathway is secondary metabolite biosynthesis. Highly reducing polyketide synthase; part of the gene cluster that mediates the biosynthesis of the gamma-pyrones fusapyrone (FPY) and deoxyfusapyrone (dFPY). FPY is an undecaketide and thus likely synthesized by the polyketide synthase FPY1 from acetyl-CoA functioning as starter unit and the addition of 10 malonyl-CoA extender units by successive Claisen-condensations. Next to this, FPY shares some rare features: C-glycosylated 4-deoxyglucose at C-3, a gem-dimethyl group at C-13, and an alpha-beta to beta-gamma double bond shift at C-20. During FPY biosynthesis mono-C-methyl groups are transferred to the tetra-, penta-, hexa- and heptaketide, while two C-methyl groups are transferred to the nonaketide, suggesting that the CMet domain is programmed to selectively catalyze two successive C-alpha-methylation reactions of the nonaketide, while other alpha-carbons are non- or mono-methylated only. While the origin of the 4'-deoxyglucose moiety remains opaque, its transfer to C-3 is most likely mediated by the C-glycosyltransferase FPY2. Next to this, the hydroxyl group present at C-33 and discriminating between FPY and dFPY, is likely to be installed by the cytochrome P450 monooxygenase FPY7. No putative function can be predicted for the remaining genes FPY3-FPY6. The chain is Highly reducing polyketide synthase 40 from Fusarium mangiferae (Mango malformation disease fungus).